Consider the following 516-residue polypeptide: Gamma-aminobutyrate transaminase 1, mitochondrial (516 aa).

The N-terminal 47 residues, M1–F47, are a transit peptide targeting the mitochondrion. Residues R45–E60 are compositionally biased toward polar residues. The interval R45 to K64 is disordered. A pyridoxal 5'-phosphate-binding site is contributed by G171–S172. Y204 is a binding site for substrate. D311 contacts pyridoxal 5'-phosphate. Residue K340 participates in substrate binding. Position 340 is an N6-(pyridoxal phosphate)lysine (K340).

Belongs to the class-III pyridoxal-phosphate-dependent aminotransferase family.

The protein resides in the mitochondrion. The catalysed reaction is 4-aminobutanoate + pyruvate = succinate semialdehyde + L-alanine. It carries out the reaction 4-aminobutanoate + glyoxylate = succinate semialdehyde + glycine. Functionally, transaminase that degrades gamma-amino butyric acid (GABA) and uses pyruvate as amino-group acceptor, but not 2-oxoglutarate. In Oryza sativa subsp. indica (Rice), this protein is Gamma-aminobutyrate transaminase 1, mitochondrial.